A 249-amino-acid chain; its full sequence is MNTWITAKIIKIKKWKNNLFSVIVNAPISPFTAGQFTKLGYQKKNGKIIQRAYSFVNAPHEKNLEFYMVLIKNGQLTTKLYNLNNTDHIQIKKKSYGFFTLNEIPTCKILWMFATGTGIGPYLSMLKYQKNTEKFQKIVLIHAVRYRHDLTYFNEINNLKNIYNKKLYTQFIISREKTNFSLSGRIPQLLKTEELEKHINLFIENNTSHVMLCGNPDMVKQTQNFLINNKNMKKHLRRKPGQISSENYW.

An FAD-binding FR-type domain is found at 2–102 (NTWITAKIIK…KKSYGFFTLN (101 aa)). FAD-binding positions include 51-54 (RAYS), Tyr-67, 75-77 (QLT), and Thr-117. Residues 144–145 (VR), 174–175 (SR), Arg-185, and 215–217 (NPD) contribute to the NADP(+) site. Position 248–249 (248–249 (YW)) interacts with FAD.

The protein belongs to the ferredoxin--NADP reductase type 1 family. FAD serves as cofactor.

Its subcellular location is the cytoplasm. The enzyme catalyses 2 reduced [2Fe-2S]-[ferredoxin] + NADP(+) + H(+) = 2 oxidized [2Fe-2S]-[ferredoxin] + NADPH. It carries out the reaction reduced [flavodoxin] + NADP(+) = oxidized [flavodoxin] + NADPH + 2 H(+). Functionally, transports electrons between flavodoxin or ferredoxin and NADPH. This Buchnera aphidicola subsp. Baizongia pistaciae (strain Bp) protein is Flavodoxin/ferredoxin--NADP reductase (fpr).